A 260-amino-acid polypeptide reads, in one-letter code: MANLGCWMLVLFVATWSDLGLCKKRPKPGGWNTGGSRYPGQGSPGGNRYPPQGGGWGQPHGGGWGQPHGGGWGQPHGGGWGQPHGGGWGQPHGGGWGQGGGTHNQWNKPSKPKTNMKHMAGAAAAGAVVGGLGGYMLGSAMSRPLIHFGNDYEDRYYRENMYRYPSQVYYRPVDQYSNQNNFVHDCVNVTIKQHTVTTTTKGENFTETDVKMMERVVEQMCITQYEKESQAYYQRGSSMVLFSSPPVILLISFLIFLIVG.

Residues 1–22 (MANLGCWMLVLFVATWSDLGLC) form the signal peptide. An interaction with GRB2, ERI3 and SYN1 region spans residues 23-237 (KKRPKPGGWN…ESQAYYQRGS (215 aa)). The tract at residues 26 to 112 (PKPGGWNTGG…HNQWNKPSKP (87 aa)) is disordered. Tandem repeats lie at residues 51-58 (PQGGGWGQ), 59-66 (PHGGGWGQ), 67-74 (PHGGGWGQ), 75-82 (PHGGGWGQ), 83-90 (PHGGGWGQ), and 91-98 (PHGGGWGQ). The 6 X 8 AA tandem repeats of P-H-G-G-G-W-G-Q stretch occupies residues 51 to 98 (PQGGGWGQPHGGGWGQPHGGGWGQPHGGGWGQPHGGGWGQPHGGGWGQ). Residues 52–102 (QGGGWGQPHGGGWGQPHGGGWGQPHGGGWGQPHGGGWGQPHGGGWGQGGGT) show a composition bias toward gly residues. The Cu(2+) site is built by histidine 68, glycine 69, glycine 70, histidine 76, glycine 77, glycine 78, histidine 84, glycine 85, glycine 86, histidine 92, glycine 93, and glycine 94. Cysteine 186 and cysteine 221 are joined by a disulfide. 2 N-linked (GlcNAc...) asparagine glycosylation sites follow: asparagine 188 and asparagine 204. Serine 237 carries the GPI-anchor amidated serine lipid modification. The propeptide at 238–260 (SMVLFSSPPVILLISFLIFLIVG) is removed in mature form.

The protein belongs to the prion family. As to quaternary structure, monomer and homodimer. Has a tendency to aggregate into amyloid fibrils containing a cross-beta spine, formed by a steric zipper of superposed beta-strands. Soluble oligomers may represent an intermediate stage on the path to fibril formation. Copper binding may promote oligomerization. Interacts with GRB2, APP, ERI3/PRNPIP and SYN1. Mislocalized cytosolically exposed PrP interacts with MGRN1; this interaction alters MGRN1 subcellular location and causes lysosomal enlargement. Interacts with KIAA1191.

The protein resides in the cell membrane. The protein localises to the golgi apparatus. In terms of biological role, its primary physiological function is unclear. Has cytoprotective activity against internal or environmental stresses. May play a role in neuronal development and synaptic plasticity. May be required for neuronal myelin sheath maintenance. May play a role in iron uptake and iron homeostasis. Soluble oligomers are toxic to cultured neuroblastoma cells and induce apoptosis (in vitro). Association with GPC1 (via its heparan sulfate chains) targets PRNP to lipid rafts. Also provides Cu(2+) or Zn(2+) for the ascorbate-mediated GPC1 deaminase degradation of its heparan sulfate side chains. The polypeptide is Major prion protein (PRNP) (Saimiri sciureus (Common squirrel monkey)).